The sequence spans 98 residues: NADH-ubiquinone oxidoreductase chain 4L (98 aa).

3 helical membrane passes run M1–F21, L26–L46, and M61–A81.

The protein belongs to the complex I subunit 4L family.

It localises to the mitochondrion membrane. It catalyses the reaction a ubiquinone + NADH + 5 H(+)(in) = a ubiquinol + NAD(+) + 4 H(+)(out). In terms of biological role, core subunit of the mitochondrial membrane respiratory chain NADH dehydrogenase (Complex I) which catalyzes electron transfer from NADH through the respiratory chain, using ubiquinone as an electron acceptor. Part of the enzyme membrane arm which is embedded in the lipid bilayer and involved in proton translocation. This chain is NADH-ubiquinone oxidoreductase chain 4L (MT-ND4L), found in Squalus acanthias (Spiny dogfish).